Here is a 209-residue protein sequence, read N- to C-terminus: Redox-sensing transcriptional repressor Rex (209 aa).

Residues 16 to 55 (LYYRFIQNLSLSGKQRVSSAELSEAVKVDSATIRRDFSYF) constitute a DNA-binding region (H-T-H motif). NAD(+) is bound at residue 90 to 95 (GVGNLG).

The protein belongs to the transcriptional regulatory Rex family. In terms of assembly, homodimer.

The protein localises to the cytoplasm. Its function is as follows. Modulates transcription in response to changes in cellular NADH/NAD(+) redox state. The chain is Redox-sensing transcriptional repressor Rex from Bacillus anthracis (strain A0248).